The primary structure comprises 364 residues: S-adenosylmethionine:tRNA ribosyltransferase-isomerase (364 aa).

The disordered stretch occupies residues 344 to 364 (ASDKMQETSGRGERPRFDHEI).

It belongs to the QueA family. As to quaternary structure, monomer.

The protein resides in the cytoplasm. The enzyme catalyses 7-aminomethyl-7-carbaguanosine(34) in tRNA + S-adenosyl-L-methionine = epoxyqueuosine(34) in tRNA + adenine + L-methionine + 2 H(+). It participates in tRNA modification; tRNA-queuosine biosynthesis. Functionally, transfers and isomerizes the ribose moiety from AdoMet to the 7-aminomethyl group of 7-deazaguanine (preQ1-tRNA) to give epoxyqueuosine (oQ-tRNA). This is S-adenosylmethionine:tRNA ribosyltransferase-isomerase from Thioalkalivibrio sulfidiphilus (strain HL-EbGR7).